The sequence spans 289 residues: MRAILRGLLPATLLPLAAYAQEATIKEVHDAPAVRGSIIANMLQEHDNPFTLYPYDTNYLIYTNTSDLNKEAISTYNWSENARKDEVKFQLSLAFPLWRGILGPNSVLGASYTQKSWWQLSNSKESSPFRETNYEPQLFLGFATDYRFAGWTLRDVEMGYNHDSNGRSDPTSRSWNRLYTRLMAENGNWLVEVKPWYVIGSTDDNPDITKYMGYYQLKIGYHLGEAVLSAKGQYNWNTGYGGAEVGLSYPVTKHVRLYTQVYSGYGESLIDYNFNQTRVGVGVMLNDIF.

Positions 1–20 (MRAILRGLLPATLLPLAAYA) are cleaved as a signal peptide. Over 21–52 (QEATIKEVHDAPAVRGSIIANMLQEHDNPFTL) the chain is Periplasmic. The chain crosses the membrane as a beta stranded span at residues 53–65 (YPYDTNYLIYTNT). The Extracellular segment spans residues 66 to 84 (SDLNKEAISTYNWSENARK). Residues 85-99 (DEVKFQLSLAFPLWR) traverse the membrane as a beta stranded segment. Residues 100-105 (GILGPN) are Periplasmic-facing. A beta stranded transmembrane segment spans residues 106 to 118 (SVLGASYTQKSWW). At 119–128 (QLSNSKESSP) the chain is on the extracellular side. S126 is a binding site for Ca(2+). The chain crosses the membrane as a beta stranded span at residues 129-148 (FRETNYEPQLFLGFATDYRF). The Periplasmic portion of the chain corresponds to 149–150 (AG). The beta stranded transmembrane segment at 151–164 (WTLRDVEMGYNHDS) threads the bilayer. H162 functions as the Proton acceptor in the catalytic mechanism. The active-site Nucleophile is the S164. The Extracellular portion of the chain corresponds to 165 to 173 (NGRSDPTSR). R167 and S172 together coordinate Ca(2+). The beta stranded transmembrane segment at 174 to 186 (SWNRLYTRLMAEN) threads the bilayer. The Periplasmic segment spans residues 187–188 (GN). Residues 189–198 (WLVEVKPWYV) traverse the membrane as a beta stranded segment. At 199–216 (IGSTDDNPDITKYMGYYQ) the chain is on the extracellular side. D204 is a binding site for Ca(2+). Residues 217-223 (LKIGYHL) traverse the membrane as a beta stranded segment. Residues 224-225 (GE) lie on the Periplasmic side of the membrane. A beta stranded transmembrane segment spans residues 226-234 (AVLSAKGQY). Residues 235–241 (NWNTGYG) lie on the Extracellular side of the membrane. The beta stranded transmembrane segment at 242–250 (GAEVGLSYP) threads the bilayer. Residues 251-255 (VTKHV) are Periplasmic-facing. A beta stranded membrane pass occupies residues 256–265 (RLYTQVYSGY). Topologically, residues 266-274 (GESLIDYNF) are extracellular. Residues 275–286 (NQTRVGVGVMLN) form a beta stranded membrane-spanning segment. Over 287–289 (DIF) the chain is Periplasmic.

This sequence belongs to the phospholipase A1 family. As to quaternary structure, homodimer; dimerization is reversible, and the dimeric form is the active one. The cofactor is Ca(2+).

It localises to the cell outer membrane. It catalyses the reaction a 1,2-diacyl-sn-glycero-3-phosphocholine + H2O = a 2-acyl-sn-glycero-3-phosphocholine + a fatty acid + H(+). The catalysed reaction is a 1,2-diacyl-sn-glycero-3-phosphocholine + H2O = a 1-acyl-sn-glycero-3-phosphocholine + a fatty acid + H(+). Functionally, hydrolysis of phosphatidylcholine with phospholipase A2 (EC 3.1.1.4) and phospholipase A1 (EC 3.1.1.32) activities. The chain is Phospholipase A1 (pldA) from Salmonella typhi.